Here is a 209-residue protein sequence, read N- to C-terminus: Large ribosomal subunit protein bL25 (209 aa).

Positions 183–209 (TAGERPAAEPAAAPGAAPAAGPEEAEE) are disordered. The span at 184–209 (AGERPAAEPAAAPGAAPAAGPEEAEE) shows a compositional bias: low complexity.

This sequence belongs to the bacterial ribosomal protein bL25 family. CTC subfamily. In terms of assembly, part of the 50S ribosomal subunit; part of the 5S rRNA/L5/L18/L25 subcomplex. Contacts the 5S rRNA. Binds to the 5S rRNA independently of L5 and L18.

In terms of biological role, this is one of the proteins that binds to the 5S RNA in the ribosome where it forms part of the central protuberance. The polypeptide is Large ribosomal subunit protein bL25 (Pelotomaculum thermopropionicum (strain DSM 13744 / JCM 10971 / SI)).